Reading from the N-terminus, the 202-residue chain is dITP/XTP pyrophosphatase (202 aa).

7-12 contacts substrate; the sequence is SNNPGK. Mg(2+)-binding residues include glutamate 39 and aspartate 68. Residue aspartate 68 is the Proton acceptor of the active site. Substrate contacts are provided by residues alanine 69, 157-160, lysine 180, and 185-186; these read FGFD and HR.

Belongs to the HAM1 NTPase family. Homodimer. Mg(2+) serves as cofactor.

It catalyses the reaction XTP + H2O = XMP + diphosphate + H(+). The enzyme catalyses dITP + H2O = dIMP + diphosphate + H(+). It carries out the reaction ITP + H2O = IMP + diphosphate + H(+). In terms of biological role, pyrophosphatase that catalyzes the hydrolysis of nucleoside triphosphates to their monophosphate derivatives, with a high preference for the non-canonical purine nucleotides XTP (xanthosine triphosphate), dITP (deoxyinosine triphosphate) and ITP. Seems to function as a house-cleaning enzyme that removes non-canonical purine nucleotides from the nucleotide pool, thus preventing their incorporation into DNA/RNA and avoiding chromosomal lesions. The sequence is that of dITP/XTP pyrophosphatase from Polaromonas naphthalenivorans (strain CJ2).